The chain runs to 448 residues: C4-dicarboxylate transport protein (448 aa).

The next 9 membrane-spanning stretches (helical) occupy residues Ser-9–Pro-29, Leu-59–Met-79, Val-91–Ile-111, Ala-159–Leu-179, Ile-203–Ile-223, Leu-237–Ser-257, Gly-312–Ala-332, Ile-345–Gly-365, and Ile-367–Ile-387.

It belongs to the dicarboxylate/amino acid:cation symporter (DAACS) (TC 2.A.23) family.

The protein localises to the cell inner membrane. In terms of biological role, responsible for the transport of dicarboxylates such as succinate, fumarate, and malate from the periplasm across the membrane. The polypeptide is C4-dicarboxylate transport protein (Acinetobacter baylyi (strain ATCC 33305 / BD413 / ADP1)).